The sequence spans 537 residues: Trypsin-resistant surface T6 protein (537 aa).

A signal peptide spans 1-22 (MLACLAILAVVGLGMTRVSALS). The hydrophilic stretch occupies residues 310–330 (GNTYDNLDKKPDKGNGITSKE). Residues 504-508 (LPSTG) carry the LPXTG sorting signal motif. T507 bears the Pentaglycyl murein peptidoglycan amidated threonine mark. Residues 508–537 (GSIGTYLFKAIGSAAMIGAIGIYIVKRRKA) constitute a propeptide, removed by sortase.

The protein localises to the secreted. It is found in the cell wall. The chain is Trypsin-resistant surface T6 protein (tee6) from Streptococcus pyogenes serotype M6 (strain ATCC BAA-946 / MGAS10394).